The chain runs to 293 residues: N-acetylneuraminate lyase (293 aa).

Aceneuramate contacts are provided by Ser48 and Ser49. The active-site Proton donor is the Tyr137. The active-site Schiff-base intermediate with substrate is the Lys165. Aceneuramate is bound by residues Thr167, Gly189, Asp191, Glu192, and Ser208.

It belongs to the DapA family. NanA subfamily. As to quaternary structure, homotetramer.

The protein localises to the cytoplasm. The catalysed reaction is aceneuramate = aldehydo-N-acetyl-D-mannosamine + pyruvate. The protein operates within amino-sugar metabolism; N-acetylneuraminate degradation; D-fructose 6-phosphate from N-acetylneuraminate: step 1/5. Catalyzes the reversible aldol cleavage of N-acetylneuraminic acid (sialic acid; Neu5Ac) to form pyruvate and N-acetylmannosamine (ManNAc) via a Schiff base intermediate. This is N-acetylneuraminate lyase from Staphylococcus aureus (strain bovine RF122 / ET3-1).